The primary structure comprises 928 residues: G-protein coupled receptor family C group 6 member A (928 aa).

Positions 1 to 20 (MALLITVVTCFMIILDTSQS) are cleaved as a signal peptide. Over 21–594 (CHTPDDFVAI…EYLDWDDSLA (574 aa)) the chain is Extracellular. N-linked (GlcNAc...) asparagine glycosylation is found at N332, N555, and N567. Residues 595–615 (LLLIALSLLGIAFVLAIGIIF) form a helical membrane-spanning segment. Residues 616–630 (TRNLKTPVVKSSGGL) lie on the Cytoplasmic side of the membrane. Residues 631–651 (VVCYVMLICHALNFASTGFFI) traverse the membrane as a helical segment. Residues 652–669 (GEPQDFACKTRQTLFGVS) lie on the Extracellular side of the membrane. A helical membrane pass occupies residues 670-690 (FTLCVSCILTKSLKILLAFSF). Topologically, residues 691-706 (DPKLTMFLKCLYRPVP) are cytoplasmic. Residues 707-727 (IVLTCTGIQVVICTLWLVLAA) traverse the membrane as a helical segment. At 728-750 (PSVEENISLPRVIILECEEGSAL) the chain is on the extracellular side. The helical transmembrane segment at 751–771 (AFGTMLGYITVLAFICFVFAF) threads the bilayer. Topologically, residues 772-784 (KGRKLPENYNEAK) are cytoplasmic. The chain crosses the membrane as a helical span at residues 785–805 (FLTFGMLIYFIAWITFIPVYT). The Extracellular segment spans residues 806-812 (TTFGKYL). The helical transmembrane segment at 813–833 (PAVEIIVILISNYGILCCIFF) threads the bilayer. The Cytoplasmic segment spans residues 834 to 928 (PKCYIILCKQ…TLRQKRSSSI (95 aa)).

This sequence belongs to the G-protein coupled receptor 3 family. In terms of assembly, homodimer; disulfide-linked. Post-translationally, N-glycosylated. In terms of tissue distribution, expressed at high level in liver, lung, spleen and heart. Expressed at lower level in kidney, skeletal muscle and brain. Expressed in 7 dpc, 11 dpc, 15 dpc and 17 dpc embryos.

It is found in the cell membrane. Receptor activated by multiple ligands, including osteocalcin (BGLAP), basic amino acids, and various cations. Activated by amino acids with a preference for basic amino acids such as L-Lys, L-Arg and L-ornithine but also by small and polar amino acids. The L-alpha amino acids respond is augmented by divalent cations Ca(2+) and Mg(2+). Seems to act through a G(q)/G(11) and G(i)-coupled pathway. Regulates testosterone production by acting as a ligand for uncarboxylated osteocalcin hormone: osteocalcin-binding at the surface of Leydig cells initiates a signaling response that promotes the expression of enzymes required for testosterone synthesis in a CREB-dependent manner. Mediates the non-genomic effects of androgens in multiple tissue. May coordinate nutritional and hormonal anabolic signals through the sensing of extracellular amino acids, osteocalcin, divalent ions and its responsiveness to anabolic steroids. The polypeptide is G-protein coupled receptor family C group 6 member A (Gprc6a) (Mus musculus (Mouse)).